Here is a 461-residue protein sequence, read N- to C-terminus: Cysteine--tRNA ligase (461 aa).

Residue cysteine 28 coordinates Zn(2+). A 'HIGH' region motif is present at residues 30–40 (ITIYDLCHIGH). Positions 209, 234, and 238 each coordinate Zn(2+). The short motif at 266–270 (KMSKS) is the 'KMSKS' region element. Lysine 269 provides a ligand contact to ATP.

Belongs to the class-I aminoacyl-tRNA synthetase family. Monomer. It depends on Zn(2+) as a cofactor.

It localises to the cytoplasm. The enzyme catalyses tRNA(Cys) + L-cysteine + ATP = L-cysteinyl-tRNA(Cys) + AMP + diphosphate. The polypeptide is Cysteine--tRNA ligase (Yersinia pseudotuberculosis serotype O:3 (strain YPIII)).